We begin with the raw amino-acid sequence, 207 residues long: MPRIIKHLGRVDYEPTWRAMQAFTDSRGAETRDELWVVEHPPVFTQGLAGKPEHLLQQNDVPVVKTDRGGQITYHGPGQLVVYLLVDFKRMHVGVRELVRRIEQAIIDMLAEQGIAANGDVDAPGVYVDGAKIASLGLRIKNGATYHGLSLNVDMDLTPFSWINPCGYANLKVTQMKNLGVNLTVAEAADKLLPHLERHLSTSKETA.

The BPL/LPL catalytic domain occupies 29–204; sequence AETRDELWVV…HLERHLSTSK (176 aa). Residues 68 to 75, 135 to 137, and 148 to 150 contribute to the substrate site; these read RGGQITYH, SLG, and GLS. The active-site Acyl-thioester intermediate is the C166.

This sequence belongs to the LipB family.

Its subcellular location is the cytoplasm. The enzyme catalyses octanoyl-[ACP] + L-lysyl-[protein] = N(6)-octanoyl-L-lysyl-[protein] + holo-[ACP] + H(+). It participates in protein modification; protein lipoylation via endogenous pathway; protein N(6)-(lipoyl)lysine from octanoyl-[acyl-carrier-protein]: step 1/2. Its function is as follows. Catalyzes the transfer of endogenously produced octanoic acid from octanoyl-acyl-carrier-protein onto the lipoyl domains of lipoate-dependent enzymes. Lipoyl-ACP can also act as a substrate although octanoyl-ACP is likely to be the physiological substrate. In Chromobacterium violaceum (strain ATCC 12472 / DSM 30191 / JCM 1249 / CCUG 213 / NBRC 12614 / NCIMB 9131 / NCTC 9757 / MK), this protein is Octanoyltransferase.